The sequence spans 184 residues: ATP synthase subunit b, chloroplastic (184 aa).

Residues 27–49 (LATNPINLSVVLGVLIFFGKGVL) form a helical membrane-spanning segment.

The protein belongs to the ATPase B chain family. F-type ATPases have 2 components, F(1) - the catalytic core - and F(0) - the membrane proton channel. F(1) has five subunits: alpha(3), beta(3), gamma(1), delta(1), epsilon(1). F(0) has four main subunits: a(1), b(1), b'(1) and c(10-14). The alpha and beta chains form an alternating ring which encloses part of the gamma chain. F(1) is attached to F(0) by a central stalk formed by the gamma and epsilon chains, while a peripheral stalk is formed by the delta, b and b' chains.

Its subcellular location is the plastid. It localises to the chloroplast thylakoid membrane. In terms of biological role, f(1)F(0) ATP synthase produces ATP from ADP in the presence of a proton or sodium gradient. F-type ATPases consist of two structural domains, F(1) containing the extramembraneous catalytic core and F(0) containing the membrane proton channel, linked together by a central stalk and a peripheral stalk. During catalysis, ATP synthesis in the catalytic domain of F(1) is coupled via a rotary mechanism of the central stalk subunits to proton translocation. Component of the F(0) channel, it forms part of the peripheral stalk, linking F(1) to F(0). The sequence is that of ATP synthase subunit b, chloroplastic from Lepidium virginicum (Virginia pepperweed).